The primary structure comprises 957 residues: GPMGPSGPRGIPGPPGAPGPQGFPGEPGASGPMGPRGPPGPPGKNGDDGEAGKPGRPGERGPSGPQGARGIPGTAGIPGMKGHRGFSGIDGAKGDAGPAGPKGAPGQMGPRGIPGERGRPGAPGPAGARGNDGATGAAGPPGPTGPAGPPGFPGAVGAKGEAGPQGARGSEGPQGVRGEPGPPGPAGAAGANGAPGIAGAPGFPGARGPSGPQGPSGPSGPKGNSGEPGAPGSKGDTGAKGEPGPTGIQGPPGPAGEEGKRGARGEPGPAGIPGPPGERGGPGSRGFPGADGVAGPKGPAGERGSPGPAGPKGSPGEAGRPGEAGIPGAKGITGSPGSPGPDGKTGPPGPAGQDGRPGPPGPPGARGQAGVMGFPGPKGAAGEPGKAGERGVPGPPGAVGPAGKDGEAGAQGPPGPAGPAGERGEQGPAGSPGFQGIPGPAGPPGEAGKPGEQGVPGDIGAPGPSGARGERGFPGERGVQGPPGPAGPRGANGAPGNDGAKGDAGAPGAPGSQGAPGIQGMPGERGAAGIPGPKGDRGDAGPKGADGSPGKDGVRGITGPIGPPGPAGAPGDKGEAGPSGPAGPTGARGAPGDRGEPGPPGPAGFAGPPGADGQPGAKGEPGDAGAKGTGPPGPIGNVGAPGPKGARGSAGPPGATGFPGAAGRVGPPGPSGNAGPPGPPGPVGKRGETGPAGRPGEVGPPGPPGPAGEKGAPGADGPAGAPGTPGPQGIAGQRGVVGIPGQRGERGFPGIPGPSGEPGKQGPSGTSGERGPPGPMGPPGIAGPPGESGREGAPGAEGSPGRDGSPGAKGDRGETGPAGPPGAPGAPGAPGPVGPAGKSGDRGETGPAGPAGPIGPVGARGAAGPQGPRGDKGETGEQGDRGIKGHRGFSGIQGPPGPPGSPGEQGPSGASGPAGPRGPPGSAGSPGKDGINGIPGPIGPPGPRPGPPGPPGPPGPP.

The disordered stretch occupies residues 1 to 957 (GPMGPSGPRG…PGPPGPPGPP (957 aa)). Positions 23–33 (FPGEPGASGPM) are enriched in low complexity. Residues 45-59 (NGDDGEAGKPGRPGE) show a composition bias toward basic and acidic residues. At Ser-87 the chain carries Phosphoserine. Low complexity-rich tracts occupy residues 95 to 113 (DAGP…PRGI) and 125 to 138 (PAGA…TGAA). Positions 140-152 (PPGPTGPAGPPGF) are enriched in pro residues. Low complexity-rich tracts occupy residues 186–210 (AGAA…RGPS) and 219–228 (SGPKGNSGEP). Gly residues predominate over residues 277–286 (GERGGPGSRG). 8 stretches are compositionally biased toward low complexity: residues 330-356 (KGIT…QDGR), 365-384 (ARGQ…AGEP), 426-453 (QGPA…PGEQ), 488-516 (PRGA…QGAP), 576-590 (AGPS…ARGA), 603-618 (AGFA…PGAK), 649-665 (SAGP…AGRV), and 707-731 (AGEK…QGIA). At Ser-579 the chain carries Phosphoserine. Pro residues-rich tracts occupy residues 772 to 782 (PPGPMGPPGIA) and 818 to 833 (AGPP…PGPV). Positions 854–868 (IGPVGARGAAGPQGP) are enriched in low complexity. Over residues 869–883 (RGDKGETGEQGDRGI) the composition is skewed to basic and acidic residues. Low complexity predominate over residues 902–935 (PGEQGPSGASGPAGPRGPPGSAGSPGKDGINGIP). Pro residues predominate over residues 937–957 (PIGPPGPRPGPPGPPGPPGPP).

It belongs to the fibrillar collagen family. Trimers of one alpha 2(I) and two alpha 1(I) chains. In terms of processing, prolines at the third position of the tripeptide repeating unit (G-X-Y) are hydroxylated in some or all of the chains. Forms the fibrils of tendon, ligaments and bones. In bones, the fibrils are mineralized with calcium hydroxyapatite.

The protein localises to the secreted. It is found in the extracellular space. Its subcellular location is the extracellular matrix. Its function is as follows. Type I collagen is a member of group I collagen (fibrillar forming collagen). This is Collagen alpha-1(I) chain from Hippopotamus amphibius (Hippopotamus).